The following is a 123-amino-acid chain: Ribonuclease P protein component (123 aa).

This sequence belongs to the RnpA family. Consists of a catalytic RNA component (M1 or rnpB) and a protein subunit.

The catalysed reaction is Endonucleolytic cleavage of RNA, removing 5'-extranucleotides from tRNA precursor.. Functionally, RNaseP catalyzes the removal of the 5'-leader sequence from pre-tRNA to produce the mature 5'-terminus. It can also cleave other RNA substrates such as 4.5S RNA. The protein component plays an auxiliary but essential role in vivo by binding to the 5'-leader sequence and broadening the substrate specificity of the ribozyme. This chain is Ribonuclease P protein component, found in Streptomyces bikiniensis.